The chain runs to 150 residues: Large-conductance mechanosensitive channel (150 aa).

The next 2 helical transmembrane spans lie at 19-39 (VGIIIGGAFGAIVNTLVSDVL) and 85-105 (GIFLNALISFMIMAFAVFMLI).

Belongs to the MscL family. In terms of assembly, homopentamer.

It is found in the cell inner membrane. Its function is as follows. Channel that opens in response to stretch forces in the membrane lipid bilayer. May participate in the regulation of osmotic pressure changes within the cell. This chain is Large-conductance mechanosensitive channel, found in Chlorobium limicola (strain DSM 245 / NBRC 103803 / 6330).